Consider the following 356-residue polypeptide: 3-dehydroquinate synthase (356 aa).

NAD(+) contacts are provided by residues E71–K76, G105–D109, T129–S130, K142, and K151. 3 residues coordinate Zn(2+): E184, H247, and H264.

This sequence belongs to the sugar phosphate cyclases superfamily. Dehydroquinate synthase family. Co(2+) is required as a cofactor. The cofactor is Zn(2+). It depends on NAD(+) as a cofactor.

The protein localises to the cytoplasm. The enzyme catalyses 7-phospho-2-dehydro-3-deoxy-D-arabino-heptonate = 3-dehydroquinate + phosphate. The protein operates within metabolic intermediate biosynthesis; chorismate biosynthesis; chorismate from D-erythrose 4-phosphate and phosphoenolpyruvate: step 2/7. Functionally, catalyzes the conversion of 3-deoxy-D-arabino-heptulosonate 7-phosphate (DAHP) to dehydroquinate (DHQ). The chain is 3-dehydroquinate synthase from Lactococcus lactis subsp. cremoris (strain SK11).